The chain runs to 165 residues: SsrA-binding protein (165 aa).

Over residues 135–158 the composition is skewed to basic and acidic residues; sequence QAHDKRQDMARRDAQREVTRELGR. The segment at 135 to 165 is disordered; the sequence is QAHDKRQDMARRDAQREVTRELGRRVKGMTS.

This sequence belongs to the SmpB family.

It localises to the cytoplasm. Its function is as follows. Required for rescue of stalled ribosomes mediated by trans-translation. Binds to transfer-messenger RNA (tmRNA), required for stable association of tmRNA with ribosomes. tmRNA and SmpB together mimic tRNA shape, replacing the anticodon stem-loop with SmpB. tmRNA is encoded by the ssrA gene; the 2 termini fold to resemble tRNA(Ala) and it encodes a 'tag peptide', a short internal open reading frame. During trans-translation Ala-aminoacylated tmRNA acts like a tRNA, entering the A-site of stalled ribosomes, displacing the stalled mRNA. The ribosome then switches to translate the ORF on the tmRNA; the nascent peptide is terminated with the 'tag peptide' encoded by the tmRNA and targeted for degradation. The ribosome is freed to recommence translation, which seems to be the essential function of trans-translation. This is SsrA-binding protein from Mycolicibacterium vanbaalenii (strain DSM 7251 / JCM 13017 / BCRC 16820 / KCTC 9966 / NRRL B-24157 / PYR-1) (Mycobacterium vanbaalenii).